The primary structure comprises 412 residues: Phosphoglycerate kinase (412 aa).

Substrate is bound by residues D24–N26, R40, H63–R66, R122, and R162. Residues K212, G300, E331, and G360 to S363 contribute to the ATP site.

The protein belongs to the phosphoglycerate kinase family. Monomer.

Its subcellular location is the cytoplasm. It catalyses the reaction (2R)-3-phosphoglycerate + ATP = (2R)-3-phospho-glyceroyl phosphate + ADP. It functions in the pathway carbohydrate degradation; glycolysis; pyruvate from D-glyceraldehyde 3-phosphate: step 2/5. The protein is Phosphoglycerate kinase (pgk) of Mycobacterium bovis (strain ATCC BAA-935 / AF2122/97).